Consider the following 299-residue polypeptide: Putative pyrroline-5-carboxylate reductase 4 (299 aa).

The protein belongs to the pyrroline-5-carboxylate reductase family.

The catalysed reaction is L-proline + NADP(+) = (S)-1-pyrroline-5-carboxylate + NADPH + 2 H(+). The enzyme catalyses L-proline + NAD(+) = (S)-1-pyrroline-5-carboxylate + NADH + 2 H(+). It participates in amino-acid biosynthesis; L-proline biosynthesis; L-proline from L-glutamate 5-semialdehyde: step 1/1. This chain is Putative pyrroline-5-carboxylate reductase 4, found in Caenorhabditis elegans.